The following is a 592-amino-acid chain: 2-succinyl-5-enolpyruvyl-6-hydroxy-3-cyclohexene-1-carboxylate synthase (592 aa).

The protein belongs to the TPP enzyme family. MenD subfamily. As to quaternary structure, homodimer. Mg(2+) is required as a cofactor. Mn(2+) serves as cofactor. Requires thiamine diphosphate as cofactor.

The catalysed reaction is isochorismate + 2-oxoglutarate + H(+) = 5-enolpyruvoyl-6-hydroxy-2-succinyl-cyclohex-3-ene-1-carboxylate + CO2. It participates in quinol/quinone metabolism; 1,4-dihydroxy-2-naphthoate biosynthesis; 1,4-dihydroxy-2-naphthoate from chorismate: step 2/7. It functions in the pathway quinol/quinone metabolism; menaquinone biosynthesis. Catalyzes the thiamine diphosphate-dependent decarboxylation of 2-oxoglutarate and the subsequent addition of the resulting succinic semialdehyde-thiamine pyrophosphate anion to isochorismate to yield 2-succinyl-5-enolpyruvyl-6-hydroxy-3-cyclohexene-1-carboxylate (SEPHCHC). In Leifsonia xyli subsp. xyli (strain CTCB07), this protein is 2-succinyl-5-enolpyruvyl-6-hydroxy-3-cyclohexene-1-carboxylate synthase.